Reading from the N-terminus, the 242-residue chain is DNA repair protein RecO (242 aa).

The protein belongs to the RecO family.

Its function is as follows. Involved in DNA repair and RecF pathway recombination. The chain is DNA repair protein RecO from Vibrio atlanticus (strain LGP32) (Vibrio splendidus (strain Mel32)).